The primary structure comprises 537 residues: Inositol phosphorylceramide glucuronosyltransferase 1 (537 aa).

The helical transmembrane segment at 6 to 26 threads the bilayer; sequence TSLWVLLLALVSIQLNGSFGS. Asp-124 and Asp-126 together coordinate Mn(2+). Residues 124–126, 153–155, 180–184, and 248–255 contribute to the substrate site; these read DAD, NSG, TGGDQ, and HYTLGPLK. Position 248 (His-248) interacts with Mn(2+). Transmembrane regions (helical) follow at residues 293–313, 375–395, 406–426, 468–488, and 494–514; these read DELVVKFLFLLPLCALLFCIY, VSVVVCFTAVLLSLGISFAIV, VLVYEWTFTIFFLLFGVFLLF, MAFLAIAAVSLPYILGITALF, and MVGLAIILAAFMTYASEHLAV.

The protein belongs to the glycosyltransferase 8 family. Glycogenin subfamily. The cofactor is Mn(2+). In terms of tissue distribution, expressed in seedlings, roots, leaves, stems and siliques.

It localises to the golgi apparatus membrane. The enzyme catalyses glucuronate acceptor + UDP-alpha-D-glucuronate = acceptor beta-D-glucuronoside + UDP + H(+). It carries out the reaction a 1D-myo-inositol-1-phospho-N-[(R)-2-hydroxy-very-long-chain fatty acyl]-(R)-4-hydroxysphingoid base + UDP-alpha-D-glucuronate = an alpha-D-glucuronosyl-(1&lt;-&gt;6)-1D-myo-inositol-1-phospho-N-[(R)-2-hydroxy-very-long-chain fatty acyl]-(R)-4-hydroxysphingoid base + UDP + H(+). The protein operates within sphingolipid metabolism. In terms of biological role, mediates the transfer of glucuronic acid (GlcA) from UDP-GlcA to glycosyl inositol phosphorylceramides (GIPCs). The formation of GIPCs sphingolipids is essential for pollen function, plant growth and defense. Required for global fitness. The chain is Inositol phosphorylceramide glucuronosyltransferase 1 from Arabidopsis thaliana (Mouse-ear cress).